The sequence spans 212 residues: Thymidylate kinase (212 aa).

ATP is bound at residue 10–17 (GPDGAGKT).

It belongs to the thymidylate kinase family.

The enzyme catalyses dTMP + ATP = dTDP + ADP. Phosphorylation of dTMP to form dTDP in both de novo and salvage pathways of dTTP synthesis. The chain is Thymidylate kinase from Enterococcus faecalis (strain ATCC 700802 / V583).